We begin with the raw amino-acid sequence, 403 residues long: Protein WVD2-like 6 (403 aa).

Disordered regions lie at residues 1–179 (MDSE…ALPN) and 254–403 (LKKI…AVEP). Positions 25-56 (GDSSNGNGGTSENLECCSTQHPMEASEGTQNE) are enriched in polar residues. Over residues 103–118 (SVAPNVKPVKSPKSKS) the composition is skewed to low complexity. Residue serine 113 is modified to Phosphoserine. 3 stretches are compositionally biased toward basic and acidic residues: residues 120–132 (NGREAHVTKHGNH), 139–153 (GTRDKPKLRETRKQV), and 162–171 (QYPKEDDGKP). The span at 263–273 (KSPKLGRKKTN) shows a compositional bias: basic residues. The segment covering 336 to 348 (KVAPAKAVTASTK) has biased composition (low complexity). Positions 385 to 394 (VNEDRNESHM) are enriched in basic and acidic residues.

Belongs to the TPX2 family. In terms of tissue distribution, expressed in seedlings.

It is found in the cytoplasm. It localises to the cytoskeleton. Microtubule-associated protein (MAP) that regulates the orientation of interphase cortical microtubules. The sequence is that of Protein WVD2-like 6 from Arabidopsis thaliana (Mouse-ear cress).